The following is a 20-amino-acid chain: Hemocyanin subunit Ib (20 aa).

A disordered region spans residues 1–20; the sequence is DSVGSTTAHKQQNINHLLDK.

The protein belongs to the tyrosinase family. Hemocyanin subfamily. As to quaternary structure, composed of 3 major subunits (IB, II and III) and 1 minor subunit (IA) which form homohexamers and heterohexamers. May also form larger structures. Hemolymph.

The protein localises to the secreted. It localises to the extracellular space. Hemocyanins are copper-containing oxygen carriers occurring freely dissolved in the hemolymph of many mollusks and arthropods. The sequence is that of Hemocyanin subunit Ib from Panulirus japonicus (Japanese spiny lobster).